A 376-amino-acid polypeptide reads, in one-letter code: Bifunctional enzyme IspD/IspF (376 aa).

The tract at residues 1–220 is 2-C-methyl-D-erythritol 4-phosphate cytidylyltransferase; it reads MRIAAILVAG…RSMSISMIPR (220 aa). A 2-C-methyl-D-erythritol 2,4-cyclodiphosphate synthase region spans residues 220-376; the sequence is RIGTGYDVHA…QAAVIIMIPA (157 aa). The a divalent metal cation site is built by aspartate 226 and histidine 228. 4-CDP-2-C-methyl-D-erythritol 2-phosphate is bound by residues 226–228 and 252–253; these read DVH and HS. Residue histidine 260 participates in a divalent metal cation binding. 4-CDP-2-C-methyl-D-erythritol 2-phosphate-binding positions include 274-276, 350-353, phenylalanine 357, and arginine 360; these read DIG and TTSE.

The protein in the N-terminal section; belongs to the IspD/TarI cytidylyltransferase family. IspD subfamily. In the C-terminal section; belongs to the IspF family. It depends on a divalent metal cation as a cofactor.

It carries out the reaction 2-C-methyl-D-erythritol 4-phosphate + CTP + H(+) = 4-CDP-2-C-methyl-D-erythritol + diphosphate. The enzyme catalyses 4-CDP-2-C-methyl-D-erythritol 2-phosphate = 2-C-methyl-D-erythritol 2,4-cyclic diphosphate + CMP. It participates in isoprenoid biosynthesis; isopentenyl diphosphate biosynthesis via DXP pathway; isopentenyl diphosphate from 1-deoxy-D-xylulose 5-phosphate: step 2/6. It functions in the pathway isoprenoid biosynthesis; isopentenyl diphosphate biosynthesis via DXP pathway; isopentenyl diphosphate from 1-deoxy-D-xylulose 5-phosphate: step 4/6. Functionally, bifunctional enzyme that catalyzes the formation of 4-diphosphocytidyl-2-C-methyl-D-erythritol from CTP and 2-C-methyl-D-erythritol 4-phosphate (MEP) (IspD), and catalyzes the conversion of 4-diphosphocytidyl-2-C-methyl-D-erythritol 2-phosphate (CDP-ME2P) to 2-C-methyl-D-erythritol 2,4-cyclodiphosphate (ME-CPP) with a corresponding release of cytidine 5-monophosphate (CMP) (IspF). The polypeptide is Bifunctional enzyme IspD/IspF (Granulibacter bethesdensis (strain ATCC BAA-1260 / CGDNIH1)).